Reading from the N-terminus, the 491-residue chain is Lysine--tRNA ligase (491 aa).

Positions 398 and 405 each coordinate Mg(2+).

This sequence belongs to the class-II aminoacyl-tRNA synthetase family. Homodimer. The cofactor is Mg(2+).

The protein resides in the cytoplasm. It carries out the reaction tRNA(Lys) + L-lysine + ATP = L-lysyl-tRNA(Lys) + AMP + diphosphate. In Mycoplasmopsis synoviae (strain 53) (Mycoplasma synoviae), this protein is Lysine--tRNA ligase.